The primary structure comprises 202 residues: Imidazole glycerol phosphate synthase subunit HisH 2 (202 aa).

The region spanning Met-1–Val-202 is the Glutamine amidotransferase type-1 domain. Cys-80 serves as the catalytic Nucleophile. Residues His-183 and Glu-185 contribute to the active site.

Heterodimer of HisH and HisF.

It localises to the cytoplasm. The catalysed reaction is 5-[(5-phospho-1-deoxy-D-ribulos-1-ylimino)methylamino]-1-(5-phospho-beta-D-ribosyl)imidazole-4-carboxamide + L-glutamine = D-erythro-1-(imidazol-4-yl)glycerol 3-phosphate + 5-amino-1-(5-phospho-beta-D-ribosyl)imidazole-4-carboxamide + L-glutamate + H(+). It catalyses the reaction L-glutamine + H2O = L-glutamate + NH4(+). Its pathway is amino-acid biosynthesis; L-histidine biosynthesis; L-histidine from 5-phospho-alpha-D-ribose 1-diphosphate: step 5/9. IGPS catalyzes the conversion of PRFAR and glutamine to IGP, AICAR and glutamate. The HisH subunit catalyzes the hydrolysis of glutamine to glutamate and ammonia as part of the synthesis of IGP and AICAR. The resulting ammonia molecule is channeled to the active site of HisF. This Pseudomonas aeruginosa (strain ATCC 15692 / DSM 22644 / CIP 104116 / JCM 14847 / LMG 12228 / 1C / PRS 101 / PAO1) protein is Imidazole glycerol phosphate synthase subunit HisH 2 (hisH2).